Reading from the N-terminus, the 206-residue chain is Large ribosomal subunit protein uL3 (206 aa).

The segment at 126–155 is disordered; that stretch reads HGHAGGPGAHGSRFHRHPGSMGANSTPSRV.

The protein belongs to the universal ribosomal protein uL3 family. Part of the 50S ribosomal subunit. Forms a cluster with proteins L14 and L19.

One of the primary rRNA binding proteins, it binds directly near the 3'-end of the 23S rRNA, where it nucleates assembly of the 50S subunit. This is Large ribosomal subunit protein uL3 from Leptospira interrogans serogroup Icterohaemorrhagiae serovar copenhageni (strain Fiocruz L1-130).